Here is a 340-residue protein sequence, read N- to C-terminus: Glycerol-3-phosphate dehydrogenase [NAD(P)+] (340 aa).

NADPH is bound by residues S15, Y16, H36, and K110. The sn-glycerol 3-phosphate site is built by K110, G139, and T141. An NADPH-binding site is contributed by A143. Sn-glycerol 3-phosphate-binding residues include K195, D248, S258, R259, and N260. K195 functions as the Proton acceptor in the catalytic mechanism. R259 lines the NADPH pocket. The NADPH site is built by V283 and E285.

This sequence belongs to the NAD-dependent glycerol-3-phosphate dehydrogenase family.

It is found in the cytoplasm. The enzyme catalyses sn-glycerol 3-phosphate + NAD(+) = dihydroxyacetone phosphate + NADH + H(+). The catalysed reaction is sn-glycerol 3-phosphate + NADP(+) = dihydroxyacetone phosphate + NADPH + H(+). It functions in the pathway membrane lipid metabolism; glycerophospholipid metabolism. Functionally, catalyzes the reduction of the glycolytic intermediate dihydroxyacetone phosphate (DHAP) to sn-glycerol 3-phosphate (G3P), the key precursor for phospholipid synthesis. The protein is Glycerol-3-phosphate dehydrogenase [NAD(P)+] of Baumannia cicadellinicola subsp. Homalodisca coagulata.